A 2625-amino-acid chain; its full sequence is Highly reducing polyketide synthase frbB (2625 aa).

The segment covering 1–10 (MRNIDEHMSE) has biased composition (basic and acidic residues). Residues 1 to 25 (MRNIDEHMSERATLQSSGGYGERDS) are disordered. The Ketosynthase family 3 (KS3) domain maps to 27-449 (VEPIAIIGMS…GTNAHVILDR (423 aa)). Catalysis depends on for beta-ketoacyl synthase activity residues cysteine 200, histidine 334, and histidine 375. Residues 563 to 883 (YVFSGQGAQY…DAASTLLTTI (321 aa)) form a malonyl-CoA:ACP transacylase (MAT) domain region. The N-terminal hotdog fold stretch occupies residues 942 to 1080 (HELLGNMSTD…GRIRAVLDDS (139 aa)). Residues 942–1252 (HELLGNMSTD…GMILAKLPGG (311 aa)) are dehydratase (DH) domain. Residues 942 to 1255 (HELLGNMSTD…LAKLPGGTSR (314 aa)) enclose the PKS/mFAS DH domain. Residue histidine 974 is the Proton acceptor; for dehydratase activity of the active site. The tract at residues 1102–1255 (VRFVSPSAFY…LAKLPGGTSR (154 aa)) is C-terminal hotdog fold. Aspartate 1167 acts as the Proton donor; for dehydratase activity in catalysis. Positions 1490-1673 (YHQIKAYIAE…GFVDTEPVFR (184 aa)) are methyltransferase (CMet) domain. The enoyl reductase (ER) domain stretch occupies residues 1907 to 2220 (GLLETFHWKP…SGKHIGKVIL (314 aa)). A ketoreductase (KR) domain region spans residues 2261-2439 (AVYIVVGGLG…GYSINIGPVS (179 aa)). In terms of domain architecture, Carrier spans 2542 to 2619 (GAEAAVLTAI…HLARLAAEES (78 aa)). Serine 2579 is modified (O-(pantetheine 4'-phosphoryl)serine).

Its pathway is antifungal biosynthesis. Its function is as follows. Highly reducing polyketide synthase; part of the gene cluster that mediates the biosynthesis of the antifungal antibiotic FR901469, an inhibitor of beta-1,3-glucansynthase, exerting antifungal activity against the pathogenes Candida albicans and Aspergillus fumigatus. FR901469 is a cyclic depsipeptide containing 12 amino acid residues and a fatty acid chain. The NRPS frbI contains 12 modules responsible for the formation of the depsipeptide backbone which is denoted as Acyl-Thr-Ala-Tyr-Val-4OHPro-Thr-Thr-3OHPro-threo3OHGln-Gly-Thr-Orn-OH (C71H116N14O23). The PKS frbB is probably involved in the production of the hydrocarbon chain, and the acyl-CoA ligase frbC might be involved in the transport of the chain to the peptide ptoduct of frbI. Because FR901469 contains 3 hydroxylated amino acid residues, the 3 oxygenases frbA, frbH, and frbJ might be participating in amino acid hydroxylation. As no thioesterase domains were detected in frbI or frbB, the thioesterases frbD and frbE may instead release and cyclize the products of the NRPS and PKS, respectively. The chain is Highly reducing polyketide synthase frbB from Dothideomycetidae sp. (strain 11243) (Fungal sp. (strain No.11243)).